We begin with the raw amino-acid sequence, 93 residues long: Small ribosomal subunit protein mS33 (93 aa).

Belongs to the mitochondrion-specific ribosomal protein mS33 family. As to quaternary structure, component of the mitochondrial small ribosomal subunit (mt-SSU). Mature yeast 74S mitochondrial ribosomes consist of a small (37S) and a large (54S) subunit. The 37S small subunit contains a 15S ribosomal RNA (15S mt-rRNA) and at least 32 different proteins. The 54S large subunit contains a 21S rRNA (21S mt-rRNA) and at least 45 different proteins.

It is found in the mitochondrion. Functionally, component of the mitochondrial ribosome (mitoribosome), a dedicated translation machinery responsible for the synthesis of mitochondrial genome-encoded proteins, including at least some of the essential transmembrane subunits of the mitochondrial respiratory chain. The mitoribosomes are attached to the mitochondrial inner membrane and translation products are cotranslationally integrated into the membrane. This Schizosaccharomyces pombe (strain 972 / ATCC 24843) (Fission yeast) protein is Small ribosomal subunit protein mS33 (rsm27).